Reading from the N-terminus, the 1034-residue chain is Tubulin glycylase 3D (1034 aa).

Polar residues-rich tracts occupy residues 1–13 (MINSHHTSQQTLN) and 131–146 (QVNSVLADNSNIQNDF). Disordered stretches follow at residues 1–21 (MINSHHTSQQTLNKESKSQMD), 131–166 (QVNSVLADNSNIQNDFYPQYRKPKNPTTKKRQSTDY), and 189–208 (LNQQNQQQQDLAKNRVDNSQ). The segment covering 151 to 161 (RKPKNPTTKKR) has biased composition (basic residues). Over residues 189–199 (LNQQNQQQQDL) the composition is skewed to low complexity. The 360-residue stretch at 571-930 (DINNVIDDEK…YGMAQKSGIK (360 aa)) folds into the TTL domain. Residues 741 to 744 (QKYI), Lys-754, and Asp-756 contribute to the ATP site. A disordered region spans residues 1002–1034 (HDQKQFSSQQANNIETYSRPQTAKSQTQSSKKL).

It is found in the cytoplasm. Probable glycylase which modifies tubulin, generating side chains of glycine on the gamma-carboxyl groups of specific glutamate residues within the C-terminal tail of tubulin. This is Tubulin glycylase 3D (TTLL3D) from Tetrahymena thermophila (strain SB210).